Consider the following 134-residue polypeptide: Ribosome-binding factor A (134 aa).

Belongs to the RbfA family. As to quaternary structure, monomer. Binds 30S ribosomal subunits, but not 50S ribosomal subunits or 70S ribosomes.

The protein resides in the cytoplasm. One of several proteins that assist in the late maturation steps of the functional core of the 30S ribosomal subunit. Associates with free 30S ribosomal subunits (but not with 30S subunits that are part of 70S ribosomes or polysomes). Required for efficient processing of 16S rRNA. May interact with the 5'-terminal helix region of 16S rRNA. The sequence is that of Ribosome-binding factor A from Synechococcus sp. (strain CC9311).